Consider the following 443-residue polypeptide: Probable D-serine dehydratase (443 aa).

At K106 the chain carries N6-(pyridoxal phosphate)lysine.

The protein belongs to the serine/threonine dehydratase family. DsdA subfamily. Pyridoxal 5'-phosphate serves as cofactor.

It catalyses the reaction D-serine = pyruvate + NH4(+). In Cupriavidus pinatubonensis (strain JMP 134 / LMG 1197) (Cupriavidus necator (strain JMP 134)), this protein is Probable D-serine dehydratase.